We begin with the raw amino-acid sequence, 371 residues long: RT1 class I histocompatibility antigen, AA alpha chain (371 aa).

Positions 1–24 (MEAMAPRTLLLLLAAALAPTQTRA) are cleaved as a signal peptide. Positions 25–114 (GSHSLRYFYT…LRGYYNQSEG (90 aa)) are alpha-1. The Extracellular portion of the chain corresponds to 25–311 (GSHSLRYFYT…PSTDSNMETT (287 aa)). The N-linked (GlcNAc...) asparagine glycan is linked to N110. The alpha-2 stretch occupies residues 115–206 (GSHTIQEMYG…ELGKETLLRS (92 aa)). Positions 207–298 (DPPEAHVTLH…GLPKPLSQRW (92 aa)) are alpha-3. The Ig-like C1-type domain maps to 209–295 (PEAHVTLHPR…EHEGLPKPLS (87 aa)). Residue N280 is glycosylated (N-linked (GlcNAc...) asparagine). A connecting peptide region spans residues 299-311 (EPSPSTDSNMETT). Residues 312 to 336 (VIYVILGAVAMIGAVAIIGAMVAVV) form a helical membrane-spanning segment. Topologically, residues 337-371 (RRRKRNTGGKGGDYAPAPGRDSSQSSDVSLPDCKA) are cytoplasmic. Positions 342–371 (NTGGKGGDYAPAPGRDSSQSSDVSLPDCKA) are disordered. Residues S362 and S365 each carry the phosphoserine modification.

This sequence belongs to the MHC class I family. Heterodimer of an alpha chain and a beta chain (beta-2-microglobulin).

The protein localises to the membrane. Involved in the presentation of foreign antigens to the immune system. The sequence is that of RT1 class I histocompatibility antigen, AA alpha chain from Rattus norvegicus (Rat).